The chain runs to 434 residues: SPARC-related modular calcium-binding protein 1 (434 aa).

The N-terminal stretch at 1 to 26 (MLPARCARLLTPHLLLVLVQLSPARG) is a signal peptide. In terms of domain architecture, Kazal-like spans 37–89 (SDRDPQCNLHCSRTQPKPICASDGRSYESMCEYQRAKCRDPTLGVVHRGRCKD). 6 disulfide bridges follow: Cys-43/Cys-74, Cys-47/Cys-67, Cys-56/Cys-87, Cys-95/Cys-118, Cys-129/Cys-136, and Cys-138/Cys-158. One can recognise a Thyroglobulin type-1 1 domain in the interval 92-158 (QSKCRLERAQ…SSVQNKTPVC (67 aa)). Positions 149 to 172 (SSVQNKTPVCSGSVTDKPLSQGNS) are enriched in polar residues. Residues 149 to 191 (SSVQNKTPVCSGSVTDKPLSQGNSGRKDDGSKPTPTMETQPVF) form a disordered region. N-linked (GlcNAc...) asparagine glycosylation is present at Asn-214. Residues 224 to 292 (VYSCDQERQS…TSTRYVMPSC (69 aa)) form the Thyroglobulin type-1 2 domain. Disulfide bonds link Cys-227/Cys-251, Cys-262/Cys-269, and Cys-271/Cys-292. 2 EF-hand domains span residues 359 to 394 (LEER…VKKK) and 396 to 431 (KPKK…SKEG). Positions 372, 374, 376, 378, 383, 409, 411, 413, and 420 each coordinate Ca(2+). Asn-374 carries an N-linked (GlcNAc...) asparagine glycan.

In terms of processing, glycosylated. In terms of tissue distribution, widely expressed in many tissues with a strongest signal in ovary. No expression in spleen.

It localises to the secreted. The protein localises to the extracellular space. It is found in the extracellular matrix. The protein resides in the basement membrane. Its function is as follows. Plays essential roles in both eye and limb development. Probable regulator of osteoblast differentiation. The chain is SPARC-related modular calcium-binding protein 1 (SMOC1) from Homo sapiens (Human).